We begin with the raw amino-acid sequence, 778 residues long: Arf-GAP with coiled-coil, ANK repeat and PH domain-containing protein 2 (778 aa).

The region spanning 1–226 is the BAR domain; the sequence is MKMTVDFEEC…MKDLGAQLDR (226 aa). Positions 266 to 361 constitute a PH domain; the sequence is GIVMEGYLFK…WIKAVQTSIA (96 aa). The disordered stretch occupies residues 371–391; it reads SEKLDKKSSPSTGSLDSGNES. Polar residues predominate over residues 379-388; it reads SPSTGSLDSG. Phosphoserine is present on residues Ser384 and Ser387. The region spanning 399-520 is the Arf-GAP domain; it reads ESALQRVQCV…KFVDKYSVSS (122 aa). A C4-type zinc finger spans residues 414–437; the sequence is CCDCGLADPRWASINLGITLCIEC. The tract at residues 518-596 is disordered; sequence VSSSPPEQEK…EPEGERQDSS (79 aa). Position 521 is a phosphoserine (Ser521). A compositionally biased stretch (basic and acidic residues) spans 524-539; it reads EQEKKVVSKDSEEKRL. Positions 550 to 569 are enriched in polar residues; that stretch reads VRTSIQSSVKSNDSGIQQSS. Ser581 and Ser584 each carry phosphoserine. 3 ANK repeats span residues 640–669, 673–702, and 706–735; these read NKAT…NVNQ, QGRG…NQHA, and EGKD…NEEM. The residue at position 742 (Tyr742) is a Phosphotyrosine. Position 775 is a phosphoserine (Ser775).

In terms of assembly, interacts with RAB35 (GTP-bound form); the interaction is direct and probably recruits ACAP2 to membranes. Interacts with MICALL1; the interaction is indirect through RAB35.

It localises to the endosome membrane. It is found in the cell membrane. GAP activity stimulated by phosphatidylinositol 4,5-bisphosphate (PIP2) and phosphatidic acid. In terms of biological role, GTPase-activating protein (GAP) for ADP ribosylation factor 6 (ARF6). Doesn't show GAP activity for RAB35. This chain is Arf-GAP with coiled-coil, ANK repeat and PH domain-containing protein 2 (ACAP2), found in Oryctolagus cuniculus (Rabbit).